Here is a 795-residue protein sequence, read N- to C-terminus: Lon protease 1 (795 aa).

Positions 9–204 (LPVLPLRNTV…RVLALLLRDL (196 aa)) constitute a Lon N-terminal domain. 360–367 (GPPGVGKT) provides a ligand contact to ATP. The 182-residue stretch at 596–777 (EPQVGAAQGL…GEVLKLLLLP (182 aa)) folds into the Lon proteolytic domain. Residues Ser-683 and Lys-726 contribute to the active site.

This sequence belongs to the peptidase S16 family. Homohexamer. Organized in a ring with a central cavity.

The protein resides in the cytoplasm. The enzyme catalyses Hydrolysis of proteins in presence of ATP.. ATP-dependent serine protease that mediates the selective degradation of mutant and abnormal proteins as well as certain short-lived regulatory proteins. Required for cellular homeostasis and for survival from DNA damage and developmental changes induced by stress. Degrades polypeptides processively to yield small peptide fragments that are 5 to 10 amino acids long. Binds to DNA in a double-stranded, site-specific manner. This chain is Lon protease 1, found in Thermus thermophilus (strain ATCC BAA-163 / DSM 7039 / HB27).